The chain runs to 272 residues: Large ribosomal subunit protein uL2 (272 aa).

The interval 222–272 is disordered; the sequence is GTAMNPVDHPHGGGEGRNFGKHPVSPWGKKTKGKKTRNNRLTDKFIVHRRS. The segment covering 250–259 has biased composition (basic residues); that stretch reads KKTKGKKTRN. The span at 261-272 shows a compositional bias: basic and acidic residues; the sequence is RLTDKFIVHRRS.

Belongs to the universal ribosomal protein uL2 family. In terms of assembly, part of the 50S ribosomal subunit. Forms a bridge to the 30S subunit in the 70S ribosome.

Functionally, one of the primary rRNA binding proteins. Required for association of the 30S and 50S subunits to form the 70S ribosome, for tRNA binding and peptide bond formation. It has been suggested to have peptidyltransferase activity; this is somewhat controversial. Makes several contacts with the 16S rRNA in the 70S ribosome. The protein is Large ribosomal subunit protein uL2 of Baumannia cicadellinicola subsp. Homalodisca coagulata.